A 361-amino-acid polypeptide reads, in one-letter code: Ribosomal RNA large subunit methyltransferase M (361 aa).

Residues Ser187, 220–223, Asp239, Asp259, and Asp276 contribute to the S-adenosyl-L-methionine site; that span reads CPGG. Catalysis depends on Lys305, which acts as the Proton acceptor.

Belongs to the class I-like SAM-binding methyltransferase superfamily. RNA methyltransferase RlmE family. RlmM subfamily. In terms of assembly, monomer.

The protein localises to the cytoplasm. It carries out the reaction cytidine(2498) in 23S rRNA + S-adenosyl-L-methionine = 2'-O-methylcytidine(2498) in 23S rRNA + S-adenosyl-L-homocysteine + H(+). Functionally, catalyzes the 2'-O-methylation at nucleotide C2498 in 23S rRNA. The sequence is that of Ribosomal RNA large subunit methyltransferase M from Shewanella baltica (strain OS185).